The following is a 315-amino-acid chain: Olfactory receptor 2V1 (315 aa).

Transmembrane regions (helical) follow at residues 31–51 (TVML…LLIY), 59–79 (PMYF…CNIV), 100–120 (IQIG…GLMA), 145–165 (IAGS…VAAM), 196–216 (FDTL…SIIV), 239–259 (LATC…AMFI), and 273–293 (KVVS…IYSL). C98 and C180 are joined by a disulfide.

This sequence belongs to the G-protein coupled receptor 1 family.

The protein resides in the cell membrane. In terms of biological role, odorant receptor. Activated by (+) and (-)-limonene. In Mus musculus (Mouse), this protein is Olfactory receptor 2V1.